We begin with the raw amino-acid sequence, 93 residues long: MKITILFLTLLVLSSSCTSIITKTMNSKETIYLDNPAVSPSIDQNLVDIHLGHSFVQGVMSFCYDCGKACFRRGKNLARCQKFVCRCTISKLR.

An N-terminal signal peptide occupies residues 1–19 (MKITILFLTLLVLSSSCTS). 3 disulfides stabilise this stretch: C63–C80, C66–C85, and C70–C87.

It belongs to the DEFL family.

It is found in the secreted. The chain is Defensin-like protein 209 from Arabidopsis thaliana (Mouse-ear cress).